We begin with the raw amino-acid sequence, 746 residues long: MEHIYQYSWMIPFIPLPVPILLGMGLLLFPTATKNLRRMWAFLSIFLLSIVMIFSIDLSIQQITGSSAYQYVWSWTINNEFSFEFGNLIDPLTSIMSILITTVGILVLIYSDSYMSHDQGYLRFFAYMSFFNTSMLGLVTSSNLIQVYIFWELVGMCSYLLIGFWFTRPIAANACQKAFVTNRVGDFGLLLGILGLYWITGSFEFQDLFEIFNNLIYNNQVHFLFVTLCAFLLFAGPVAKSAQFPLHVWLPDAMEGPTPISALIHAATMVAAGIFLVARLLPLFIGIPYIMYLISLIGIITVLLGATLALAQKDIKRGLAYSTMSQLGYMMLALGMGSYRAALFHLITHAYSKALLFLGSGSIIHSMEAVVGYSPVKSQNMVLMGGLTKHVPITKTTFLLGTLSLCGIPPLACFWSKDEILNDSWLYSPIFAVIACSTAGLTAFYMFRIYLLTFDGHLNIHFQNYSGKKSSSFYSISIWGKEEAKPINRNFCLVPLLTMNNNERATFFWKKAYQIGSNVRNRTFLSIPHFAVKTTFSYPHESDNTILFPMLILVLFTLFVGAIGIPFNQEGIDFDILSKLLTPSINLLHQNSNDFVDWYEFFKNATFSVSIAFFGIFIAFFLYKPAYSSLQNLNLLNSFAKRGPKRILWDKIINFIYDWSYNRGYIDTFYTISLTGGIRGLAELTHFFDRRVIDGITNGVGITSFFIGEGIKYVGGSRISSYLLLYLFYVLIFLFIYYFLNLLNFF.

16 helical membrane passes run 9–29 (WMIP…LLLF), 40–60 (WAFL…DLSI), 89–109 (IDPL…LVLI), 125–145 (FAYM…SNLI), 147–167 (VYIF…FWFT), 185–205 (GDFG…SFEF), 219–239 (NQVH…GPVA), 258–278 (TPIS…FLVA), 280–300 (LLPL…IGII), 327–347 (LGYM…FHLI), 354–374 (ALLF…VGYS), 396–416 (TTFL…CFWS), 425–445 (WLYS…TAFY), 546–566 (ILFP…IGIP), 607–627 (FSVS…KPAY), and 723–743 (LLLY…LNLL).

This sequence belongs to the complex I subunit 5 family. In terms of assembly, NDH is composed of at least 16 different subunits, 5 of which are encoded in the nucleus.

The protein localises to the plastid. It is found in the chloroplast thylakoid membrane. It carries out the reaction a plastoquinone + NADH + (n+1) H(+)(in) = a plastoquinol + NAD(+) + n H(+)(out). The catalysed reaction is a plastoquinone + NADPH + (n+1) H(+)(in) = a plastoquinol + NADP(+) + n H(+)(out). Functionally, NDH shuttles electrons from NAD(P)H:plastoquinone, via FMN and iron-sulfur (Fe-S) centers, to quinones in the photosynthetic chain and possibly in a chloroplast respiratory chain. The immediate electron acceptor for the enzyme in this species is believed to be plastoquinone. Couples the redox reaction to proton translocation, and thus conserves the redox energy in a proton gradient. The sequence is that of NAD(P)H-quinone oxidoreductase subunit 5, chloroplastic (ndhF) from Carica papaya (Papaya).